The chain runs to 1370 residues: DNA-directed RNA polymerase subunit beta (1370 aa).

It belongs to the RNA polymerase beta chain family. In terms of assembly, the RNAP catalytic core consists of 2 alpha, 1 beta, 1 beta' and 1 omega subunit. When a sigma factor is associated with the core the holoenzyme is formed, which can initiate transcription.

The enzyme catalyses RNA(n) + a ribonucleoside 5'-triphosphate = RNA(n+1) + diphosphate. Functionally, DNA-dependent RNA polymerase catalyzes the transcription of DNA into RNA using the four ribonucleoside triphosphates as substrates. This Bordetella petrii (strain ATCC BAA-461 / DSM 12804 / CCUG 43448) protein is DNA-directed RNA polymerase subunit beta.